The sequence spans 124 residues: Translation initiation factor 5A (124 aa).

K36 is subject to Hypusine.

The protein belongs to the eIF-5A family.

It localises to the cytoplasm. Functionally, functions by promoting the formation of the first peptide bond. The sequence is that of Translation initiation factor 5A from Haloquadratum walsbyi (strain DSM 16790 / HBSQ001).